The chain runs to 185 residues: Ribosomal RNA small subunit methyltransferase G (185 aa).

Residues glycine 59, phenylalanine 64, 110-111, and arginine 127 each bind S-adenosyl-L-methionine; that span reads IQ.

This sequence belongs to the methyltransferase superfamily. RNA methyltransferase RsmG family.

The protein localises to the cytoplasm. It carries out the reaction guanosine(527) in 16S rRNA + S-adenosyl-L-methionine = N(7)-methylguanosine(527) in 16S rRNA + S-adenosyl-L-homocysteine. Its function is as follows. Specifically methylates the N7 position of guanine in position 527 of 16S rRNA. The chain is Ribosomal RNA small subunit methyltransferase G from Helicobacter hepaticus (strain ATCC 51449 / 3B1).